The chain runs to 426 residues: Protein sum2 (426 aa).

The Sm domain maps to Met1 to Ala80. Disordered regions lie at residues Pro79 to Asn100, Gly204 to Arg305, and Ser348 to Gln426. The span at Ser84–Asp93 shows a compositional bias: pro residues. Residues Val226–Pro237 show a composition bias toward polar residues. Residues Arg261 to Ser278 are compositionally biased toward low complexity. Polar residues predominate over residues Gln279–Asp298. Residues Gln296 to Glu332 enclose the DFDF domain. Positions Glu335 to Ser351 match the FFD box motif. The segment covering Glu350–Leu371 has biased composition (basic and acidic residues). A TFG box motif is present at residues Asp360–Gly380. The segment covering Arg384–Gly401 has biased composition (basic residues). Polar residues predominate over residues Asn405 to Gln426.

In terms of biological role, required for G2/M phase checkpoint control. This is Protein sum2 (sum2) from Schizosaccharomyces pombe (strain 972 / ATCC 24843) (Fission yeast).